A 202-amino-acid polypeptide reads, in one-letter code: Imidazoleglycerol-phosphate dehydratase (202 aa).

It belongs to the imidazoleglycerol-phosphate dehydratase family.

It is found in the cytoplasm. The enzyme catalyses D-erythro-1-(imidazol-4-yl)glycerol 3-phosphate = 3-(imidazol-4-yl)-2-oxopropyl phosphate + H2O. The protein operates within amino-acid biosynthesis; L-histidine biosynthesis; L-histidine from 5-phospho-alpha-D-ribose 1-diphosphate: step 6/9. This Rhizobium etli (strain CIAT 652) protein is Imidazoleglycerol-phosphate dehydratase.